Reading from the N-terminus, the 276-residue chain is Diaminopimelate epimerase (276 aa).

Substrate contacts are provided by asparagine 13, glutamine 46, and asparagine 66. The active-site Proton donor is cysteine 75. Residues 76 to 77, asparagine 159, asparagine 192, and 210 to 211 contribute to the substrate site; these read GN and ER. The active-site Proton acceptor is cysteine 219. Position 220 to 221 (220 to 221) interacts with substrate; sequence GT.

The protein belongs to the diaminopimelate epimerase family. Homodimer.

The protein localises to the cytoplasm. The catalysed reaction is (2S,6S)-2,6-diaminopimelate = meso-2,6-diaminopimelate. It functions in the pathway amino-acid biosynthesis; L-lysine biosynthesis via DAP pathway; DL-2,6-diaminopimelate from LL-2,6-diaminopimelate: step 1/1. In terms of biological role, catalyzes the stereoinversion of LL-2,6-diaminopimelate (L,L-DAP) to meso-diaminopimelate (meso-DAP), a precursor of L-lysine and an essential component of the bacterial peptidoglycan. The sequence is that of Diaminopimelate epimerase from Azotobacter vinelandii (strain DJ / ATCC BAA-1303).